A 110-amino-acid polypeptide reads, in one-letter code: Circadian clock oscillator protein KaiB (110 aa).

It belongs to the KaiB family. The KaiABC complex composition changes during the circadian cycle to control KaiC phosphorylation. Complexes KaiC(6), KaiA(2-4):KaiC(6), KaiB(6):KaiC(6) and KaiC(6):KaiB(6):KaiA(12) are among the most important forms, many form cooperatively. Undergoes a major conformational rearrangment; in the free state forms homotetramers as a dimer of dimers. When bound to the CI domain of KaiC switches to a monomeric thioredoxin-fold (KaiB(fs)). KaiB(fs) binds CikA, leading it to dephosphorylate phospho-RpaA.

Its function is as follows. Key component of the KaiABC oscillator complex, which constitutes the main circadian regulator in cyanobacteria. Complex composition changes during the circadian cycle to control KaiC phosphorylation. KaiA stimulates KaiC autophosphorylation, while KaiB sequesters KaiA, leading to KaiC autodephosphorylation. Phospho-Ser-431 KaiC accumulation triggers binding of KaiB to form the KaiB(6):KaiC(6) complex, leading to changes in output regulators CikA and SasA. KaiB switches to a thioredoxin-like fold (KaiB(fs)) when bound to KaiC. KaiB(6):KaiC(6) formation exposes a site for KaiA binding that sequesters KaiA from KaiC, making the KaiC(6):KaiB(6):KaiA(12) complex that results in KaiC autodephosphorylation. Functionally, a metamorphic protein which reversibly switches between an inactive tetrameric fold and a rare, thioredoxin-like monomeric fold (KaiB(fs)). KaiB(fs) binds phospho-KaiC, KaiA and CikA. KaiA and CikA compete for binding to KaiB(fs), and KaiB(fs) and SasA compete for binding to KaiC, thus the clock oscillator and output signal pathway are tightly coupled. The polypeptide is Circadian clock oscillator protein KaiB (Synechococcus sp. (strain RCC307)).